A 355-amino-acid chain; its full sequence is 4-hydroxy-3-methylbut-2-en-1-yl diphosphate synthase (flavodoxin) (355 aa).

[4Fe-4S] cluster contacts are provided by Cys266, Cys269, Cys301, and Glu308.

The protein belongs to the IspG family. [4Fe-4S] cluster is required as a cofactor.

It catalyses the reaction (2E)-4-hydroxy-3-methylbut-2-enyl diphosphate + oxidized [flavodoxin] + H2O + 2 H(+) = 2-C-methyl-D-erythritol 2,4-cyclic diphosphate + reduced [flavodoxin]. It functions in the pathway isoprenoid biosynthesis; isopentenyl diphosphate biosynthesis via DXP pathway; isopentenyl diphosphate from 1-deoxy-D-xylulose 5-phosphate: step 5/6. Its function is as follows. Converts 2C-methyl-D-erythritol 2,4-cyclodiphosphate (ME-2,4cPP) into 1-hydroxy-2-methyl-2-(E)-butenyl 4-diphosphate. The sequence is that of 4-hydroxy-3-methylbut-2-en-1-yl diphosphate synthase (flavodoxin) from Caldanaerobacter subterraneus subsp. tengcongensis (strain DSM 15242 / JCM 11007 / NBRC 100824 / MB4) (Thermoanaerobacter tengcongensis).